A 1048-amino-acid chain; its full sequence is MEKRLGVKPSPASWVLPGYCWQTSVKLPRSLYLLYSFFCFSVLWLSTDADESRCQQGKTLYGAGLRTEGENHLRLLAGSLPFHACRAACCRDSACHALWWLEGMCFQADCSKPQSCQPFRTDSSNSMLIIFQKSQTTDDLGLLPEDDEPHLLRLGWGRTSWRRQSLLGAPLTLSVPSSHHQSLLRDRQKRDLSVVPTHGAMQHSKVNHSEEAGALSPTSAEVRKTITVAGSFTSNHTTQTPEWPKNVSIHPEPSEHSSPVSGTPQVKSTEHSPTDAPLPVAPSYSYATPTPQASSQSTSAPHPVVKELVVSAGKSVQITLPKNEVQLNAFVLPEAEPGETYTYDWQLITHPTDYSGEVERKHSQSLQLSKLTPGLYEFKVTVDGQNAHGEGYVNVTVKPEPRKNRPPVAVVSPQFQEISLPTTSTIIDGSQSTDDDKIVQYHWEELKGPLREEKISEDTAILKLSKLVPGNYTFSLTVVDSDGATNSTTASLTVNKAVDYPPVANAGPNQVITLPQNSITLFGNQSTDDHGITSYEWSLSPSSKGKVVEMQGVRTPALQLSAMQEGDYTYQLTVTDTAGQQATAQVTVIVQPENNKPPQADAGPDKELTLPVDSTTLDGSKSTDDQRVVSYLWEQSRGPDGVQLENANSSVATVTGLQVGTYVFTLTVKDERNLQSQSSVNVIVKEEINKPPVAKIAGNVVVTLPTSTAELDGSRSSDDKGIVSYLWTRDETSPAAGEVLNHSDHHPVLFLSNLVEGTYTFHLKVTDAKGESDTDRTTVEVKPDPRKSNLVEIILDVNVSQLTERLKGMLIRQIGVLLGVLDSDIIVQKIQPYTEQSTKMLFFVQNDPPHQLFKGHEVAAMLKSELQKQKADFLIFRALEISTVTCQLNCSDHGHCDSFTKRCVCDPFWMENFIKVQLRDGDSNCEWSVLYVIIASFVIVVALGILSWTTICCCKRQKGKPKRKSRYKILDATDQESLELKPTSRAGSKQKGPTLSSSLMHSESELDSDDAIFTWPDREKGKLLYGQNGSVPNGQTPLKSRSAREEIL.

Residues 1–29 (MEKRLGVKPSPASWVLPGYCWQTSVKLPR) lie on the Cytoplasmic side of the membrane. A helical transmembrane segment spans residues 30–50 (SLYLLYSFFCFSVLWLSTDAD). The region spanning 49-127 (ADESRCQQGK…PFRTDSSNSM (79 aa)) is the MANSC domain. At 51 to 928 (ESRCQQGKTL…RDGDSNCEWS (878 aa)) the chain is on the extracellular side. 2 disordered regions span residues 198-218 (HGAMQHSKVNHSEEAGALSPT) and 231-300 (SFTS…STSA). Polar residues predominate over residues 231–241 (SFTSNHTTQTP). An N-linked (GlcNAc...) asparagine glycan is attached at N246. Low complexity-rich tracts occupy residues 247–261 (VSIHPEPSEHSSPVS) and 287–300 (ATPTPQASSQSTSA). PKD domains follow at residues 309–400 (VVSA…VKPE), 408–497 (VAVV…VNKA), 503–593 (VANA…VQPE), 599–687 (QADA…VKEE), and 693–784 (VAKI…VKPD). N-linked (GlcNAc...) asparagine glycosylation is present at N394. A disordered region spans residues 593–623 (ENNKPPQADAGPDKELTLPVDSTTLDGSKST). A helical transmembrane segment spans residues 929–949 (VLYVIIASFVIVVALGILSWT). Topologically, residues 950 to 1048 (TICCCKRQKG…KSRSAREEIL (99 aa)) are cytoplasmic. T973 bears the Phosphothreonine mark. S977 is modified (phosphoserine). The segment at 980 to 1007 (LKPTSRAGSKQKGPTLSSSLMHSESELD) is disordered. Residues 985–994 (RAGSKQKGPT) show a composition bias toward polar residues. Phosphoserine is present on residues S1008 and S1030. The segment at 1024-1048 (LYGQNGSVPNGQTPLKSRSAREEIL) is disordered. A compositionally biased stretch (polar residues) spans 1027–1039 (QNGSVPNGQTPLK). T1036 carries the post-translational modification Phosphothreonine.

In terms of assembly, interacts with RTN4R. N-glycosylated.

Its subcellular location is the cytoplasmic granule membrane. The protein resides in the golgi apparatus membrane. It is found in the golgi apparatus. It localises to the trans-Golgi network membrane. The protein localises to the cell membrane. Possible role in axon guidance through interaction with RTN4R. Functionally, (Microbial infection) Acts as a receptor for adeno-associated virus and is involved in adeno-associated virus infection through endocytosis system. This Mus musculus (Mouse) protein is Dyslexia-associated protein KIAA0319-like protein.